The chain runs to 321 residues: uncharacterized protein (321 aa).

This is an uncharacterized protein from Sinorhizobium fredii (strain NBRC 101917 / NGR234).